An 860-amino-acid polypeptide reads, in one-letter code: DNA mismatch repair protein MutS (860 aa).

607-614 (GPNMSGKS) contacts ATP.

It belongs to the DNA mismatch repair MutS family.

Its function is as follows. This protein is involved in the repair of mismatches in DNA. It is possible that it carries out the mismatch recognition step. This protein has a weak ATPase activity. This is DNA mismatch repair protein MutS from Listeria monocytogenes serovar 1/2a (strain ATCC BAA-679 / EGD-e).